We begin with the raw amino-acid sequence, 270 residues long: Putative phosphoenolpyruvate synthase regulatory protein (270 aa).

Residue 150-157 participates in ADP binding; sequence GVSRCGKT.

It belongs to the pyruvate, phosphate/water dikinase regulatory protein family. PSRP subfamily.

The catalysed reaction is [pyruvate, water dikinase] + ADP = [pyruvate, water dikinase]-phosphate + AMP + H(+). It carries out the reaction [pyruvate, water dikinase]-phosphate + phosphate + H(+) = [pyruvate, water dikinase] + diphosphate. Functionally, bifunctional serine/threonine kinase and phosphorylase involved in the regulation of the phosphoenolpyruvate synthase (PEPS) by catalyzing its phosphorylation/dephosphorylation. This chain is Putative phosphoenolpyruvate synthase regulatory protein, found in Shewanella piezotolerans (strain WP3 / JCM 13877).